Here is a 291-residue protein sequence, read N- to C-terminus: Inactive dihydropteroate synthase 2 (291 aa).

Positions 15 to 272 (QLIMAIVNRT…EVVATRRVLE (258 aa)) constitute a Pterin-binding domain.

The protein belongs to the DHPS family. Homodimer.

Has very low affinity for the DHPS substrate 6-hydroxymethyl-7,8-dihydropterin-pyrophosphate, but can bind the inhibitor dapsone. Seems to lack dihydropteroate synthase activity, and does probably not function in folate metabolism. This Mycobacterium leprae (strain TN) protein is Inactive dihydropteroate synthase 2 (folP2).